A 1119-amino-acid polypeptide reads, in one-letter code: Transient receptor potential cation channel subfamily A member 1 (1119 aa).

Over 1–718 (MKRSLRKMWR…MKWLAYGFRA (718 aa)) the chain is Cytoplasmic. ANK repeat units follow at residues 62 to 92 (MDTF…EVLH), 97 to 126 (YGNT…NPNL), 130 to 160 (NMMA…DVNL), 164 to 193 (NGNT…KPCK), 197 to 226 (WGCF…EHGY), 238 to 267 (GKAT…QIDP), 271 to 301 (GRCT…SVDI), 308 to 337 (CHET…DINK), 341 to 370 (EGRS…QVDI), 374 to 403 (FGRN…QQIK), 412 to 441 (DGCT…SIHS), 445 to 474 (DKKS…DTRL), 481 to 510 (HGMT…LFLS), 513 to 542 (NGWT…KCTD), 547 to 576 (DGNT…DIVL), and 579 to 609 (QQAS…DECL). 5 cysteine pairs are disulfide-bonded: Cys-192-Cys-665, Cys-462-Cys-665, Cys-608-Cys-621, Cys-621-Cys-665, and Cys-633-Cys-856. Residue Pro-394 is modified to 4-hydroxyproline; by EGLN1; transient; in normoxia and hyperoxia. Cys-414 and Cys-421 together coordinate (E)-cinnamaldehyde. Residue Cys-621 coordinates (E)-cinnamaldehyde. A Cysteine sulfenic acid (-SOH); transient; in hyperoxia modification is found at Cys-633. Residues Cys-641, Cys-665, and Lys-710 each contribute to the (E)-cinnamaldehyde site. Residues 719–739 (HMMNLGSYCLGLIPMTILVVN) form a helical membrane-spanning segment. At 740-767 (IKPGMAFNSTGIINETSDHSEILDTTNS) the chain is on the extracellular side. Residues Asn-747 and Asn-753 are each glycosylated (N-linked (GlcNAc...) asparagine). A helical transmembrane segment spans residues 768 to 793 (YLIKTCMILVFLSSIFGYCKEAGQIF). 2 residues coordinate Ca(2+): Glu-788 and Gln-791. The Cytoplasmic portion of the chain corresponds to 794–798 (QQKRN). A helical transmembrane segment spans residues 799-823 (YFMDISNVLEWIIYTTGIIFVLPLF). Positions 805 and 808 each coordinate Ca(2+). Topologically, residues 824-829 (VEIPAH) are extracellular. Residues 830-850 (LQWQCGAIAVYFYWMNFLLYL) form a helical membrane-spanning segment. Over 851–862 (QRFENCGIFIVM) the chain is Cytoplasmic. Cys-856 carries the cysteine sulfenic acid (-SOH); transient; in hyperoxia modification. The chain crosses the membrane as a helical span at residues 863–892 (LEVILKTLLRSTVVFIFLLLAFGLSFYILL). The Extracellular portion of the chain corresponds to 893–901 (NLQDPFSSP). The pore-forming intramembrane region spans 902 to 922 (LLSIIQTFSMMLGDINYRESF). Over 923 to 933 (LEPYLRNELAH) the chain is Extracellular. The chain crosses the membrane as a helical span at residues 934–960 (PVLSFAQLVSFTIFVPIVLMNLLIGLA). Residues 961 to 1119 (VGDIAEVQKH…VKAKTHHLEP (159 aa)) are Cytoplasmic-facing. The stretch at 1042 to 1071 (MEILKQKYRLKDLTFLLEKQHELIKLIIQK) forms a coiled coil. 1046–1052 (KQKYRLK) contacts a 1,2-diacyl-sn-glycero-3-phospho-(1D-myo-inositol).

This sequence belongs to the transient receptor (TC 1.A.4) family. Homotetramer. Interacts with TMEM100. Interacts with EGLN1. Interacts with the scorpion wasabi receptor toxin at the same site that electrophiles but in a non-covalent manner. TRPA1 activation by electrophiles occurs though covalent modification of specific cysteine residues in the N-terminal cytoplasmic domain. In terms of processing, hydroxylation is required for TRPA1 activity inhibition in normoxia. In hypoxia, the decrease in oxygen concentration diminishes the activity of the hydroxylase EGLN1, thus relieving TRPA1 from inhibition and ultimately leading to channel activation. Post-translationally, oxidation of Cys-633 and Cys-856 in hyperoxia may override the hydroxylase EGLN1-mediated inhibition, causing TRPA1 activation.

It localises to the cell membrane. The enzyme catalyses Ca(2+)(in) = Ca(2+)(out). It catalyses the reaction Mg(2+)(in) = Mg(2+)(out). The catalysed reaction is Na(+)(in) = Na(+)(out). It carries out the reaction K(+)(in) = K(+)(out). The enzyme catalyses Zn(2+)(in) = Zn(2+)(out). Electrophilic ligands activate the channel by covalent modification of intracellular cysteines; Cys-621 plays a key role in covalent binding of electrophiles. Extracellular Ca(2+) both potentiates and inactivates TRPA1; a rapid potentiation follows by slow desensitization. Activated by increase in intracellular Ca(2+) concentration. Inhibited by the potent blocker of TRPV channels ruthenium red, A-967079, AP-18, HC-030031, and aryl sulfonamide derivative (S)-N-(4-chlorobenzyl)-1-((4-fluorophenyl)sulfonyl)pyrrolidine-2-carboxamide (ASD). Activated by benzyl isothiocyanate (BITC), iodoacetamide, sulfhydryl reactive agent MTSEA, N-methyl maleimide (NMM), N-ethylmaleimide (NEM), and 2-aminoethyldiphenylborinate (2-APB). Also activated by hyperoxia. Acivated by intracellular Zn(2+). TRPA1 activation may critically depend on the presence of small intracellular compounds such as polyphosphates. In terms of biological role, ligand-activated Ca(2+)-permeable, nonselective cation channel involved in pain detection and possibly also in cold perception, oxygen concentration perception, cough, itch, and inner ear function. Has a relatively high Ca(2+) selectivity, with a preference for divalent over monovalent cations (Ca(2+) &gt; Ba(2+) &gt; Mg(2+) &gt; NH4(+) &gt; Li(+) &gt; K(+)), the influx of cation into the cytoplasm leads to membrane depolarization. Has a central role in the pain response to endogenous inflammatory mediators, such as bradykinin and to a diverse array of irritants. Activated by a large variety of structurally unrelated electrophilic and non-electrophilic chemical compounds, such as allylthiocyanate (AITC) from mustard oil or wasabi, cinnamaldehyde, diallyl disulfide (DADS) from garlic, and acrolein, an environmental irritant. Electrophilic ligands activate TRPA1 by interacting with critical N-terminal Cys residues in a covalent manner. Non-electrophile agonists bind at distinct sites in the transmembrane domain to promote channel activation. Also acts as an ionotropic cannabinoid receptor by being activated by delta(9)-tetrahydrocannabinol (THC), the psychoactive component of marijuana. May be a component for the mechanosensitive transduction channel of hair cells in inner ear, thereby participating in the perception of sounds. This chain is Transient receptor potential cation channel subfamily A member 1, found in Homo sapiens (Human).